We begin with the raw amino-acid sequence, 889 residues long: Alanine--tRNA ligase (889 aa).

Residues His-564, His-568, Cys-677, and His-681 each contribute to the Zn(2+) site.

It belongs to the class-II aminoacyl-tRNA synthetase family. The cofactor is Zn(2+).

It is found in the cytoplasm. It catalyses the reaction tRNA(Ala) + L-alanine + ATP = L-alanyl-tRNA(Ala) + AMP + diphosphate. In terms of biological role, catalyzes the attachment of alanine to tRNA(Ala) in a two-step reaction: alanine is first activated by ATP to form Ala-AMP and then transferred to the acceptor end of tRNA(Ala). Also edits incorrectly charged Ser-tRNA(Ala) and Gly-tRNA(Ala) via its editing domain. The chain is Alanine--tRNA ligase from Rhodopseudomonas palustris (strain ATCC BAA-98 / CGA009).